The chain runs to 217 residues: 3-demethoxyubiquinol 3-hydroxylase (217 aa).

The Fe cation site is built by E66, E96, H99, E148, E180, and H183.

The protein belongs to the COQ7 family. Fe cation is required as a cofactor.

Its subcellular location is the cell membrane. It catalyses the reaction a 5-methoxy-2-methyl-3-(all-trans-polyprenyl)benzene-1,4-diol + AH2 + O2 = a 3-demethylubiquinol + A + H2O. It functions in the pathway cofactor biosynthesis; ubiquinone biosynthesis. Functionally, catalyzes the hydroxylation of 2-nonaprenyl-3-methyl-6-methoxy-1,4-benzoquinol during ubiquinone biosynthesis. The chain is 3-demethoxyubiquinol 3-hydroxylase from Xylella fastidiosa (strain 9a5c).